An 831-amino-acid chain; its full sequence is Periplasmic nitrate reductase (831 aa).

Positions 1–35 (MTISDSRRTFLKASAAAATASAAGIPLANGTAAEA) form a signal peptide, tat-type signal. The 57-residue stretch at 42–98 (IRWDKAACRFCGTGCSVLVGTKEGRVVATQGDPDAPVNRGLNCIKGYFLSKIMYGED) folds into the 4Fe-4S Mo/W bis-MGD-type domain. The [4Fe-4S] cluster site is built by C49, C52, C56, and C84. Residues K86, Q153, N178, C182, 215–222 (WGSNMAEM), 246–250 (STYEH), 265–267 (QTD), M375, Q379, N485, 511–512 (SD), K534, D561, and 721–730 (TGRVLEHWHS) each bind Mo-bis(molybdopterin guanine dinucleotide). Residue W797 participates in substrate binding. Positions 805 and 822 each coordinate Mo-bis(molybdopterin guanine dinucleotide).

Belongs to the prokaryotic molybdopterin-containing oxidoreductase family. NasA/NapA/NarB subfamily. As to quaternary structure, component of the periplasmic nitrate reductase NapAB complex composed of NapA and NapB. It depends on [4Fe-4S] cluster as a cofactor. The cofactor is Mo-bis(molybdopterin guanine dinucleotide). In terms of processing, predicted to be exported by the Tat system. The position of the signal peptide cleavage has not been experimentally proven.

It localises to the periplasm. The catalysed reaction is 2 Fe(II)-[cytochrome] + nitrate + 2 H(+) = 2 Fe(III)-[cytochrome] + nitrite + H2O. Catalytic subunit of the periplasmic nitrate reductase complex NapAB. Receives electrons from NapB and catalyzes the reduction of nitrate to nitrite. This is Periplasmic nitrate reductase from Dinoroseobacter shibae (strain DSM 16493 / NCIMB 14021 / DFL 12).